We begin with the raw amino-acid sequence, 61 residues long: Large ribosomal subunit protein bL28 (61 aa).

The protein belongs to the bacterial ribosomal protein bL28 family.

In Lacticaseibacillus paracasei (strain ATCC 334 / BCRC 17002 / CCUG 31169 / CIP 107868 / KCTC 3260 / NRRL B-441) (Lactobacillus paracasei), this protein is Large ribosomal subunit protein bL28.